The sequence spans 407 residues: Large ribosomal subunit protein uL4y (407 aa).

Residues 57–96 (PYAVSKKAGHQTSAESWGTGRAVSRIPRVPGGGTHRAGQA) form a disordered region.

The protein belongs to the universal ribosomal protein uL4 family.

The protein is Large ribosomal subunit protein uL4y (RPL4D) of Arabidopsis thaliana (Mouse-ear cress).